The sequence spans 465 residues: Serine carboxypeptidase-like 46 (465 aa).

Positions 1 to 25 are cleaved as a signal peptide; that stretch reads MPRLQCLTMATSLILLLQALSLVSS. Cystine bridges form between Cys-88/Cys-344, Cys-245/Cys-263, and Cys-288/Cys-313. Residues Asn-137 and Asn-170 are each glycosylated (N-linked (GlcNAc...) asparagine). Ser-179 is an active-site residue. N-linked (GlcNAc...) asparagine glycosylation is present at Asn-246. Catalysis depends on residues Asp-381 and His-438.

The protein belongs to the peptidase S10 family. As to expression, ubiquitous.

Its subcellular location is the secreted. Probable carboxypeptidase. The polypeptide is Serine carboxypeptidase-like 46 (SCPL46) (Arabidopsis thaliana (Mouse-ear cress)).